The following is a 513-amino-acid chain: Ribonuclease Y (513 aa).

A helical transmembrane segment spans residues 6–26; it reads YIIIAVVIIIICVILGLYIVD. A KH domain is found at 203–288; that stretch reads TVHVVNLPND…EMVEKAKKEV (86 aa). An HD domain is found at 329 to 422; that stretch reads VLKHSIEVSH…VQAADAISAA (94 aa).

It belongs to the RNase Y family.

It is found in the cell membrane. Endoribonuclease that initiates mRNA decay. This is Ribonuclease Y from Clostridium botulinum (strain ATCC 19397 / Type A).